The chain runs to 185 residues: uncharacterized protein (185 aa).

5 consecutive transmembrane segments (helical) span residues 4–24 (IAWM…LGLA), 35–55 (GLLF…ATGV), 60–80 (GASA…SIAY), 123–143 (VLAY…INDS), and 152–172 (ILKL…SYFI).

Its subcellular location is the cell membrane. This is an uncharacterized protein from Bacillus subtilis (strain 168).